The following is a 153-amino-acid chain: Large ribosomal subunit protein bL9 (153 aa).

This sequence belongs to the bacterial ribosomal protein bL9 family.

In terms of biological role, binds to the 23S rRNA. The polypeptide is Large ribosomal subunit protein bL9 (Koribacter versatilis (strain Ellin345)).